Reading from the N-terminus, the 198-residue chain is Nucleoid occlusion factor SlmA (198 aa).

The HTH tetR-type domain maps to 9–70 (RNRREEILQS…SLIEFIEDSL (62 aa)). Positions 33–52 (TTAKLAASVGVSEAALYRHF) form a DNA-binding region, H-T-H motif. A coiled-coil region spans residues 117–145 (EQDRLQGRINQLFERIEAQLRQVLREKKM).

Belongs to the nucleoid occlusion factor SlmA family. As to quaternary structure, homodimer. Interacts with FtsZ.

Its subcellular location is the cytoplasm. The protein localises to the nucleoid. Required for nucleoid occlusion (NO) phenomenon, which prevents Z-ring formation and cell division over the nucleoid. Acts as a DNA-associated cell division inhibitor that binds simultaneously chromosomal DNA and FtsZ, and disrupts the assembly of FtsZ polymers. SlmA-DNA-binding sequences (SBS) are dispersed on non-Ter regions of the chromosome, preventing FtsZ polymerization at these regions. This is Nucleoid occlusion factor SlmA from Cronobacter sakazakii (strain ATCC BAA-894) (Enterobacter sakazakii).